We begin with the raw amino-acid sequence, 212 residues long: Spore germination lipase LipC (212 aa).

The Nucleophile role is filled by Ser11. Substrate is bound by residues Gly50 and Asn82. Residues Asp186 and His189 contribute to the active site.

Belongs to the 'GDSL' lipolytic enzyme family.

It is found in the spore coat. In terms of biological role, lipase involved in spore germination. The sequence is that of Spore germination lipase LipC (lipC) from Bacillus licheniformis (strain ATCC 14580 / DSM 13 / JCM 2505 / CCUG 7422 / NBRC 12200 / NCIMB 9375 / NCTC 10341 / NRRL NRS-1264 / Gibson 46).